A 129-amino-acid polypeptide reads, in one-letter code: uncharacterized protein (129 aa).

This is an uncharacterized protein from Methanocaldococcus jannaschii (strain ATCC 43067 / DSM 2661 / JAL-1 / JCM 10045 / NBRC 100440) (Methanococcus jannaschii).